A 972-amino-acid chain; its full sequence is RNA polymerase-associated protein RapA (972 aa).

Residues 164-334 (EVGRRYAPRV…FARLRLLDPD (171 aa)) enclose the Helicase ATP-binding domain. ATP is bound at residue 177 to 184 (DEVGLGKT). The short motif at 280 to 283 (DEAH) is the DEAH box element. The Helicase C-terminal domain maps to 493 to 671 (RVNWLLEMLK…HEPEALENLI (179 aa)).

The protein belongs to the SNF2/RAD54 helicase family. RapA subfamily. In terms of assembly, interacts with the RNAP. Has a higher affinity for the core RNAP than for the holoenzyme. Its ATPase activity is stimulated by binding to RNAP.

Its function is as follows. Transcription regulator that activates transcription by stimulating RNA polymerase (RNAP) recycling in case of stress conditions such as supercoiled DNA or high salt concentrations. Probably acts by releasing the RNAP, when it is trapped or immobilized on tightly supercoiled DNA. Does not activate transcription on linear DNA. Probably not involved in DNA repair. This chain is RNA polymerase-associated protein RapA, found in Photobacterium profundum (strain SS9).